The sequence spans 352 residues: MSRGTMPQPEAWPGASCAETPAREAAATARDGGKAAASGQPRPEMQCPAEHEEDMYRAADEIEKEKELLIHERGASEPRLSVAPEMDIMDYCKKEWRGNTQKATCMKMGYEEVSQKFTSIRRVRGDNYCALRATLFQAMSQAVGLPPWLQDPELMLLPEKLISKYNWIKQWKLGLKFDGKNEDLVDKIKESLTLLRKKWAGLAEMRTAEARQIACDELFTNEAEEYSLYEAVKFLMLNRAIELYNDKEKGKEVPFFSVLLFARDTSNDPGQLLRNHLNQVGHTGGLEQVEMFLLAYAVRHTIQVYRLSKYNTEEFITVYPTDPPKDWPVVTLIAEDDRHYNIPVRVCEETSL.

Residues 1-48 are disordered; sequence MSRGTMPQPEAWPGASCAETPAREAAATARDGGKAAASGQPRPEMQCP. Low complexity predominate over residues 18–37; that stretch reads AETPAREAAATARDGGKAAA. The PIM motif motif lies at 52 to 57; sequence EEDMYR. Tyr56 carries the phosphotyrosine modification. Linear diubiquitin binding regions lie at residues 95-96 and 124-126; these read EW and RGD. The OTU domain occupies 118–346; it reads TSIRRVRGDN…DRHYNIPVRV (229 aa). Asp126 is an active-site residue. Residue Cys129 is the Nucleophile of the active site. Linear diubiquitin binding stretches follow at residues 255-259, 283-289, and 336-338; these read FFSVL, TGGLEQV, and DDR. Residue His339 is part of the active site.

This sequence belongs to the peptidase C65 family. Otulin subfamily. In terms of assembly, interacts (via the PUB domain) with RNF31 (via the PIM motif); the interaction is direct. Interacts with DVL2. Post-translationally, ubiquitinated. In terms of processing, acetylated. Phosphorylated. Phosphorylation at Tyr-56 prevents interaction with RNF31; dephosphorylation promotes interaction with RNF31 and the LUBAC complex.

It is found in the cytoplasm. The catalysed reaction is Thiol-dependent hydrolysis of ester, thioester, amide, peptide and isopeptide bonds formed by the C-terminal Gly of ubiquitin (a 76-residue protein attached to proteins as an intracellular targeting signal).. Deubiquitinase that specifically removes linear ('Met-1'-linked) polyubiquitin chains to substrates and acts as a regulator of angiogenesis and innate immune response. Required during angiogenesis, craniofacial and neuronal development by regulating the canonical Wnt signaling together with the LUBAC complex. Acts as a negative regulator of NF-kappa-B by regulating the activity of the LUBAC complex. OTULIN function is mainly restricted to homeostasis of the LUBAC complex: acts by removing 'Met-1'-linked autoubiquitination of the LUBAC complex, thereby preventing inactivation of the LUBAC complex. Acts as a key negative regulator of inflammation by restricting spontaneous inflammation and maintaining immune homeostasis. In myeloid cell, required to prevent unwarranted secretion of cytokines leading to inflammation and autoimmunity by restricting linear polyubiquitin formation. Plays a role in innate immune response by restricting linear polyubiquitin formation on LUBAC complex in response to NOD2 stimulation, probably to limit NOD2-dependent pro-inflammatory signaling. The protein is Ubiquitin thioesterase otulin of Homo sapiens (Human).